The chain runs to 277 residues: Type IV methyl-directed restriction enzyme EcoKMcrA (277 aa).

In terms of domain architecture, HNH spans 207–257 (CENCGKNAPFYLNDGNPYLEVHHVIPLSSGGADTTDNCVALCPNCHRELHY).

Its function is as follows. Restriction of 5-methyl and 5-hydroxymethylcytosines at the specific DNA sequence 5'-C(me)CGG-3'. In Escherichia coli (strain K12), this protein is Type IV methyl-directed restriction enzyme EcoKMcrA.